A 576-amino-acid polypeptide reads, in one-letter code: Cilia- and flagella-associated protein 100 (576 aa).

A disordered region spans residues 1-29 (MPIYDEASVPGTAAGRSTTDVGATAGANP). Coiled coils occupy residues 125 to 226 (IFLL…CRRY), 254 to 311 (VAEW…IMKE), and 342 to 408 (YKQL…LKDR). Disordered regions lie at residues 417-439 (TLSMGSSNAPTSSVTGSSGPGGP), 495-519 (AEKAREKDRRKVARDEKLSTQHREH), and 538-563 (TGKPLMFRSAPPQRKKVVQADDRNDE).

It belongs to the CFAP100 family. In terms of assembly, interacts with FAP73; form the modifier of inner arm (MIA) complex.

It localises to the cytoplasm. Its subcellular location is the cytoskeleton. The protein localises to the flagellum axoneme. As part of MIA, a complex associated with the outer doublet microtubules of the axoneme, may play a role in ciliary/flagellar motility by regulating the assembly and the activity of axonemal inner dynein arm. The sequence is that of Cilia- and flagella-associated protein 100 from Chlamydomonas reinhardtii (Chlamydomonas smithii).